The chain runs to 109 residues: Nucleoid-associated protein Spro_1136 (109 aa).

Disordered regions lie at residues 1 to 21 (MFGK…QEKM) and 90 to 109 (EKMA…KMPF). Low complexity predominate over residues 11–21 (MKQAQQMQEKM).

Belongs to the YbaB/EbfC family. Homodimer.

Its subcellular location is the cytoplasm. The protein localises to the nucleoid. In terms of biological role, binds to DNA and alters its conformation. May be involved in regulation of gene expression, nucleoid organization and DNA protection. The polypeptide is Nucleoid-associated protein Spro_1136 (Serratia proteamaculans (strain 568)).